The chain runs to 339 residues: Phenylalanine--tRNA ligase alpha subunit (339 aa).

Glu262 lines the Mg(2+) pocket.

This sequence belongs to the class-II aminoacyl-tRNA synthetase family. Phe-tRNA synthetase alpha subunit type 1 subfamily. As to quaternary structure, tetramer of two alpha and two beta subunits. The cofactor is Mg(2+).

Its subcellular location is the cytoplasm. It catalyses the reaction tRNA(Phe) + L-phenylalanine + ATP = L-phenylalanyl-tRNA(Phe) + AMP + diphosphate + H(+). This is Phenylalanine--tRNA ligase alpha subunit from Neisseria gonorrhoeae (strain ATCC 700825 / FA 1090).